A 18562-amino-acid chain; its full sequence is Titin homolog (18562 aa).

The region spanning 90 to 176 (PKFIQVIKAY…GVSTSYGYIT (87 aa)) is the Ig-like 1 domain. Positions 384 to 404 (RFHPQPPKPPRAGTSRRFLPE) are disordered. 4 consecutive Ig-like domains span residues 406-493 (PKFV…TQVT), 821-913 (PKIV…AFIN), 943-1038 (PKFI…LTIS), and 1135-1225 (PRFE…LTVD). Residues C842 and C897 are joined by a disulfide bond. The interval 1336 to 1360 (LPPVQKSMSVQEEKASSQRTPSPMN) is disordered. One can recognise an Ig-like 6 domain in the interval 1679–1762 (PKFLRKLVNC…ASNVAGTTFS (84 aa)). C1700 and C1751 form a disulfide bridge. 3 coiled-coil regions span residues 1766–1786 (LKLSEADDDAVDLLRQLSEIK), 2011–2038 (QSLDDQIKVTQQILKDVERDLNKMERTS), and 2065–2085 (ISDQLADRQSSEEALREALQE). A disordered region spans residues 2155-2177 (RKGSDKDKRKATRIKRVPSAHSA). Residues 2163–2172 (RKATRIKRVP) are compositionally biased toward basic residues. Residues 2205–2231 (LKQNEEAKEIQELFVKIEKEINTIAEL) adopt a coiled-coil conformation. 2 disordered regions span residues 2298–2459 (IIGI…TADA) and 2614–2637 (KSSLKAAEEDEKEGEEEGEEEVTA). The span at 2309 to 2323 (RRPSSTPRGSTRSSN) shows a compositional bias: low complexity. Residues 2324–2341 (LTTSQDSQATTKMTVSSE) show a composition bias toward polar residues. Residues 2606–2630 (LMQTLASEKSSLKAAEEDEKEGEEE) adopt a coiled-coil conformation. A compositionally biased stretch (acidic residues) spans 2621–2636 (EEDEKEGEEEGEEEVT). 2 consecutive Ig-like domains span residues 3095–3177 (KEVM…SGLY) and 3179–3264 (TERS…SFVS). The tract at residues 3362–3692 (EVPKVAEPSE…NAEAQKVVDS (331 aa)) is disordered. Acidic residues predominate over residues 3655–3665 (SEEETPLEETN). 3 Ig-like domains span residues 3789-3878 (PVFT…CEIV), 3897-3985 (PHFV…CTID), and 4038-4125 (PPYF…CVLT). 2 disulfides stabilise this stretch: C3919–C3969 and C4059–C4109. Disordered regions lie at residues 4553–4599 (QSRE…SAPT), 4634–4699 (TVEP…EIVE), 4750–4814 (GSTA…TSEV), 4826–4855 (PVPETSAPSVEPTVEKLAPAESKETSEVQP), 4912–4931 (STAAPAQEPTVEKLAPVESK), 4950–4969 (PETSAPTVEPTVEKLKPVES), 4989–5216 (PETS…EILE), 5267–5294 (GSTAAPAQEPTVEKLAPVESKETSEVEP), 5306–5325 (PETSAPTVEPTVEKLKSVES), 5345–5372 (PETSAPTVEPTVEKLAPVDSKETSEVEP), 5428–6101 (GSTA…VEPT), 6127–6157 (VQVPETSSPTVEPTVEKLAPVESKETSEVQP), 6214–6900 (STAA…ETSE), and 6930–8453 (APVE…DDKL). Positions 4555–4577 (RELDNTERNFTVNKEKDESKKPS) are enriched in basic and acidic residues. PVET repeat units lie at residues 4599-4626 (TVEKLAPVESKETPEVQAAEIVEQKDVP), 4627-4665 (VPETRAPTVEPTVEKHTPVDSKETSEVEPAEIVEQKDVP), 4666-4704 (VPETSAPTVEPTVEKHTPVESKEKSEVQPAEIVEQKDVT), 4755-4787 (PAQEPTVEKLAPVESKETSEVEPAEIVEQKDVP), 4788-4826 (VPETSAPSVEPTVEKLAPVESKETSEVQQAEIVEQKDVP), 4827-4865 (VPETSAPSVEPTVEKLAPAESKETSEVQPAEIVEQKDVT), 4917-4948 (AQEPTVEKLAPVESKETSEVQQAEIIEQKDVP), 4949-4987 (VPETSAPTVEPTVEKLKPVESKETSEVQQVEIIEQKDVP), 4988-5026 (VPETSAPTVEPTVEKLAPVESKETSEVQQAEIIEQKDVP), 5027-5065 (VPETSAPTVEPTVEKLKPVESKETSEVQQVEIIEQKDVP), 5066-5104 (VPETSAPTVEPTVEKLAPVESKETSEVQQAEIIEQKDVP), 5105-5143 (VPETSAPTVEPTVEKLKPVESKETSEVQQVEIIEQKDVP), 5144-5182 (VPETSAPTVEPTVEKHAPVESKETSEVQPAEIVEQKVVP), 5183-5221 (VPETSAPTVEPTVEKLAPVESKETPEVQPAEILEQKDVT), 5273-5304 (AQEPTVEKLAPVESKETSEVEPAEIVEQKDVP), 5305-5343 (VPETSAPTVEPTVEKLKSVESKETSEVQQAEIIEQKDVP), 5344-5382 (VPETSAPTVEPTVEKLAPVDSKETSEVEPAEIVEQKDVT), 5434-5465 (AQEPTVEKLAPVESKETSEVEPAEIVEQKDVP), 5466-5504 (VPETSAPTVEPTVEKLKSVESKETSEVQQAEIIEQKDVP), 5505-5543 (VPETSAPTVEPTVEKHAPVESKETSEVQPAEIVEQKVVP), 5544-5582 (VPETSAPTVEPTVEKLAPVESKETSEVEPAEIVEQKDVP), 5583-5621 (VPETSAPTVEPTVEKLAPVESKETSEVEPAEIVEQKDVP), 5622-5660 (VPETSAPTVEPTIEKLAPVESKETSEVEPAEIVEQKDVS), 5661-5699 (VPETSAPTVEPTIEKLAPVESKETSEVEPAEIVEQKDVS), 5700-5738 (VPETSAPTVEPTVEKLAPVESKETSEVEPAEIVEQKDVP), 5739-5777 (VPETSAPTVEPTVEKLAPVESKETSEVQPAEIVEHKDVQ), 5778-5816 (VPETSSPTVEPTVEKLAPVESKETSEVEPAEIVEQKDVP), 5817-5855 (VPETSAPTVEPTVEKLAPVESKETSEVEPAEIVEQKDVP), 5856-5894 (VPETSAPTVEPTVEKLAPVESKETSEVQPAEIVEQKDVS), 5895-5933 (VPETSAPTVEPTVEKLAPVESKETSEVQPAEIVEQKDVP), 5934-5972 (VPETSAPTVEPTVEKLAPVESKETSEVQPAEIVEHKDVQ), 5973-6011 (VPETSSPTVEPTVEKLAPVESKETSEVEPAEIVEQKDVP), 6012-6050 (VPETSAPTVEPTVEKLAPVESKETSEVQPAEIVEHKDVQ), 6051-6089 (VPETSAPTVEPTIEKLAPVESKETSEVEPAEIVEQKDVS), 6090-6128 (VPETSAPTVEPTIEKLAPVESKETSEVQPAEIVEHKDVQ), 6129-6167 (VPETSSPTVEPTVEKLAPVESKETSEVQPAEIVEQKDVT), 6219-6250 (AHEPTVEKLAPVESKETSEVEPAEIVEQKDVP), 6251-6289 (VPETSAPTVEPTVEKLAPVESKETSEVEPAEIVEQKDLP), 6290-6328 (VPETSAPTVEPTVEKLAPVESKKTSEVEPAEIVEQKDVP), 6329-6367 (VPETSAPTVEPTVEKLAPVESKETSEVEPAEIVEQKDVP), 6368-6406 (VPETSAPTVEPTVEKLAPVESKETSEVEPAEIVEQKDVP), 6407-6445 (VPETSAPTVEPTIEKLAPVESKETSEVEPAEIVEQKDVS), 6446-6484 (VPETSAPTVEPTIEKLAPVESKETSEVEPAEIVEQKDVS), 6485-6523 (VPETSAPTVEPTVEKLAPVESKETSEVEPAEIVEQKDVP), 6524-6562 (VPETSAPTVEPTVEKLAPVESKETSEVQPAEIVEHKDVQ), 6563-6601 (VPETSSPTVEPTVEKLAPVESKETSEVEPAEIVEQKDVP), 6602-6640 (VPETSAPTVEPTVEKLAPVESKETSEVEPAEIVEQKDVP), 6641-6679 (VPETSAPTVEPTVEKLAPVESKETSEVQPAEIVEHKDVQ), 6680-6718 (VPETTATTFEPTKEKLAPVDSKETSEVQTAEIVEQKDVP), 6719-6757 (VPETSATTVEPTKEKLAPGESKETSEVQQAAIVEQKDVA), 6758-6796 (VPETSATTVEPTKEKLAPVESKETSEIQTAEIVEQKDVP), 6797-6835 (VPETSTSYVEPTKEKLAPGESKETSEVQQAAIVEQKDVP), 6836-6874 (VPETSATTVEPTKEKLAPVESKETSEIQQAAVVEQKDVP), 6875-6913 (VPETSATTVEPTKEKLAPVESKETSEVQQAAIVEQKDVP), 6914-6952 (VPEANAPTFEPTVEKLAPVESKETSEVQQAAIVEQKDVP), and 6953-6991 (VPEANAPTVEPTVEKLAPVESKETSVESKETQADAKLKK). 2 stretches are compositionally biased toward basic and acidic residues: residues 4638–4651 (TVEKHTPVDSKETS) and 4677–4691 (TVEKHTPVESKEKSE). Over residues 4960-4969 (TVEKLKPVES) the composition is skewed to basic and acidic residues. The segment covering 5038–5051 (TVEKLKPVESKETS) has biased composition (basic and acidic residues). Composition is skewed to basic and acidic residues over residues 5116–5129 (TVEKLKPVESKETS) and 5155–5168 (TVEKHAPVESKETS). The stretch at 5212–5235 (AEILEQKDVTCEEEIKELLTEVEV) forms a coiled coil. The span at 5316 to 5325 (TVEKLKSVES) shows a compositional bias: basic and acidic residues. Basic and acidic residues-rich tracts occupy residues 5477 to 5490 (TVEKLKSVESKETS) and 5516 to 5529 (TVEKHAPVESKETS). Composition is skewed to basic and acidic residues over residues 6690–6704 (PTKEKLAPVDSKETS), 6729–6743 (PTKEKLAPGESKETS), 6768–6782 (PTKEKLAPVESKETS), 6807–6821 (PTKEKLAPGESKETS), 6846–6860 (PTKEKLAPVESKETS), and 6885–6899 (PTKEKLAPVESKETS). Basic and acidic residues-rich tracts occupy residues 6972–7606 (ESKE…DNFK), 7613–7630 (LQKEKDDKLKQEKDDNFK), 7637–8062 (LQKE…DNFK), and 8069–8453 (LQKE…DDKL). A coiled-coil region spans residues 6984 to 7812 (QADAKLKKEK…DKLKQETDAK (829 aa)). BLUE repeat units follow at residues 6992–6996 (EKDDK), 6997–7012 (HKQEADAKLQKENDDK), 7013–7028 (LKQEADAKLKKENDDK), 7029–7044 (LKQEADAKLKKENDDK), 7045–7060 (LKQEADAKLKKENDDK), 7061–7076 (LKQEAAAKLKKENDDK), 7077–7092 (LKQEADAKLKKENDDK), 7093–7108 (LKQEADAKLQKENDDK), 7109–7124 (LKQEADAKLQKENDDK), 7125–7140 (LKQEADAKLQKENDDK), 7141–7156 (LKQEADAKLQKENDDK), 7157–7172 (LKQEADAKLQKENDDK), 7173–7188 (LKQEADAKLKKENDDK), 7189–7204 (LKQEADAKLKKEKHDK), 7205–7220 (LKQEADAKLQKENDDK), 7221–7236 (LKQEADAKLQKENDDK), 7237–7252 (LKQEADAKLQKEKDDK), 7253–7268 (LKQEADAKLKKEKDDK), 7269–7284 (LKQDADAKLQKEKDDK), 7285–7300 (LKQEADAKLKKEKDDK), 7301–7316 (LKHEADAKLQKEKDDK), 7317–7332 (LKQEADAKLKKEKDDR), 7333–7348 (LKKDADAKLQKEKDDK), 7349–7364 (LKQEADAKLKKEKDDK), 7365–7380 (LKHEADAKLQKEKDDK), 7381–7396 (LKQEADAKLKKEKDDK), 7397–7412 (LKQEADAKLQKEKDDK), 7413–7428 (LKQEADAKLKKEKDDK), 7429–7444 (LKQEADAKLQKEKDDK), 7445–7460 (LKQEADAKLKKEKDDK), 7461–7476 (LKQEADAKLQKEKDDK), 7477–7492 (LKQEADAKLKKEKDDK), 7493–7508 (LKQEADAKLKKEKDDK), 7509–7524 (LKQDADAKLQKEKDDK), 7525–7540 (LKQEADAKLKKEKDDK), 7541–7556 (LKHEADAKLKKEKDDK), 7557–7572 (LKQEADAKLKKEKDDK), 7573–7588 (LKQDADAKLKKEKDDK), 7589–7604 (LKHEADAKLQKEKDDN), 7605–7620 (FKQEANAKLQKEKDDK), 7621–7628 (LKQEKDDN), 7629–7644 (FKQEANAKLQKEKDDK), 7645–7652 (LKQEKDDK), 7653–7668 (LKQEADAKLKKEKDDK), 7669–7684 (LKQEADAKLKKEKDDK), 7685–7700 (LKQEADAKLKKDKDDK), 7701–7716 (LKQEADAKLKKEKDDK), 7717–7732 (LKQEADAKLKKDKDDK), 7733–7748 (LKQEADAKLKKDKDDK), 7749–7764 (LKQEADAKLKKEKDDK), 7765–7772 (LKQEKNDK), 7773–7788 (LKQEADAKLKKEKDDK), 7789–7804 (LKQEADAKLKKEKDDK), 7805–7820 (LKQETDAKLKKDKDDK), 7821–7836 (LKQEADAKLKKDKDDK), 7837–7852 (LKQEADAKLKKDKDDK), 7853–7868 (LKQEADGKLKKEKDNK), 7869–7884 (LKQEADGKLKKEKDNK), 7885–7900 (LKQEADAKLKKEKDDK), 7901–7916 (LKQEADAKLKKEKDDK), 7917–7932 (LKQEADAKLKKDKDDK), 7933–7948 (LKQEADAKLKKEKDDK), 7949–7964 (LKQEADAKLKKDKDDK), 7965–7980 (LKQEANAKLQKEKDDK), 7981–7996 (LKQEADAKLQKEKDDK), 7997–8012 (LKQEADAKLKKEKDDK), 8013–8028 (LKQEADAKLQKEKDDK), 8029–8044 (LKQEADAKLKKEKDDK), 8045–8060 (LKQEADAKLQKEKDDN), 8061–8076 (FKQEANAKLQKEKDDK), 8077–8084 (LKQEKDDK), 8085–8100 (LKQEADAKLKKEKDDK), 8101–8116 (LKQEADAKLKKDKDDK), 8117–8132 (LKQEADAKLKKEKDDK), 8133–8148 (LKQEADAKLKKEKDDK), 8149–8164 (LKQEADAKLKKDKDDK), 8165–8180 (LKQEADAKLKKDKDDK), 8181–8196 (LKQEADAKLKKEKDDK), 8197–8212 (LKQETDAKLKKDKDDK), 8213–8228 (LKQEADAKLKKEKDDK), 8229–8244 (LKQEADAKLKKEKDDK), 8245–8260 (LKQEADAKLKKEKDDK), 8261–8276 (LKQEADAKLKKDKDDK), 8277–8292 (LKQEADAKLKKDKDDK), 8293–8308 (LKQEADGKLKKEKDNK), 8309–8324 (LKQEADGKLKKEKDNK), 8325–8340 (LKQEADAKLKKEKDDK), 8341–8356 (LKQEADAKLKKDKDDK), 8357–8371 (LKQEADAKLKKEKDD), 8373–8388 (LKQEADAKLKKEKDDK), 8389–8404 (LKQEADAKLKKDKDDK), 8405–8420 (LKQEADAKLKKDKDDK), 8421–8436 (LKQEADAKLKKEKDDK), 8437–8452 (LKQEADAKLKKDKDDK), 8453–8468 (LKQEADAKLKKDKDDK), and 8469–8484 (LKQEADAKLKKEKGDK). Residues 7876–8273 (KLKKEKDNKL…EADAKLKKDK (398 aa)) adopt a coiled-coil conformation. Residues 8316–8490 (KLKKEKDNKL…KGDKLKLEDQ (175 aa)) are a coiled coil. A compositionally biased stretch (basic residues) spans 8599-8611 (KHLKKKKKHHKKE). Residues 8599–8626 (KHLKKKKKHHKKEKIAVKETEQDEKTVS) are disordered. Positions 8612 to 8626 (KIAVKETEQDEKTVS) are enriched in basic and acidic residues. One can recognise a Fibronectin type-III 1 domain in the interval 8950-9041 (KPRKAQLVAL…EIIEVNTLDY (92 aa)). 20 disordered regions span residues 9079–9104 (IEEHRKLKKKSKKSKKTTDEPELDSE), 9147–9436 (VQKI…AAAE), 9481–9609 (EEQS…ETES), 9702–10224 (ADAV…ESRI), 10239–10274 (ESDDLSTASTIKLQKESDESGIDSRMGQTSEAEDSP), 10539–11018 (QSAP…DSFT), 11030–11111 (EDAV…QKDQ), 11123–11213 (KKLA…QDKT), 11225–11387 (AKTT…SLTS), 11420–11592 (KGLN…NPEL), 11624–11825 (LTKK…SDNL), 11872–11955 (LSAH…TSLS), 11996–12054 (TNLI…LQKN), 12397–12418 (GRRVMEASSDSELDDAKKRKKR), 12537–12974 (EESR…PAES), 13026–13045 (EAAKKQKEKDEQLKLETEVV), 13065–13261 (AAEA…LNDK), 13283–13514 (QAQA…EQLK), 13553–13574 (EEKQRLESEAATKKADAEKLKL), and 13594–13874 (EKLA…RRTG). Residues 9084 to 9093 (KLKKKSKKSK) are compositionally biased toward basic residues. Composition is skewed to basic and acidic residues over residues 9172–9184 (VKKDDKDVNKKSL) and 9191–9202 (TKKEIQGKPEKK). Positions 9213-9231 (SSISETSETLTKDLTQTKQ) are enriched in polar residues. Over residues 9232–9267 (SEPEPAKRTTETSVQDEVKRKTETTSKSKQTTEEHP) the composition is skewed to basic and acidic residues. Low complexity predominate over residues 9273–9283 (SDSSISSTSDA). A compositionally biased stretch (basic and acidic residues) spans 9295 to 9332 (EAQKVTEKPETAKLESKSKMTEDTTKESDNKETVDEKP). The span at 9346-9359 (STISETSETSAVES) shows a compositional bias: low complexity. Residues 9371 to 9510 (AAVDKEKKQK…QTKAKAAEKQ (140 aa)) are a coiled coil. Basic and acidic residues-rich tracts occupy residues 9373–9436 (VDKE…AAAE) and 9481–9521 (EEQS…KSNK). Low complexity predominate over residues 9547 to 9558 (SSISQKSDTSKT). Positions 9577 to 9749 (TSKQKETDKK…QTVEEQAKLD (173 aa)) form a coiled coil. Basic and acidic residues-rich tracts occupy residues 9578 to 9609 (SKQKETDKKQKLEAEITAKKSADEKSKLETES) and 9702 to 9783 (ADAV…DEKP). Positions 9798 to 9809 (SISQKSVTSKTV) are enriched in polar residues. 3 stretches are compositionally biased toward basic and acidic residues: residues 9819–10004 (ETQK…DEKP), 10040–10149 (ETQK…KSEN), and 10162–10196 (VKSEPKKSDKTETVEKEVASSTEKSDDSKTKEPKE). Coiled-coil stretches lie at residues 9822–9995 (KVAD…TEEA) and 10046–10129 (EADK…TSKK). The span at 10197 to 10206 (KKKIIKKKKD) shows a compositional bias: basic residues. The segment covering 10207–10224 (TTKPQEASKELSSDESRI) has biased composition (basic and acidic residues). A compositionally biased stretch (polar residues) spans 10239–10250 (ESDDLSTASTIK). One can recognise a Fibronectin type-III 2 domain in the interval 10461–10553 (KPTSLQVTST…DTIEATTQAE (93 aa)). Basic and acidic residues predominate over residues 10566–10609 (EKVKEPVSKKPENTKESEGHKKRDRKESEDHDENNLGKSGKDEF). Residues 10612-10637 (SGESGTSNQNEESAQLNTSFTSTEQH) are compositionally biased toward polar residues. Acidic residues predominate over residues 10663–10680 (IDADVVEVEYDEQGDDIP). The span at 10707–10716 (MAEKDSDAME) shows a compositional bias: basic and acidic residues. Residues 10779–10790 (ADQTGMSIQDLN) show a composition bias toward polar residues. Composition is skewed to basic and acidic residues over residues 10840–10852 (QLDKSQEVEDDKM) and 10863–10884 (KKPESREVSGGKSEKSKEKESD). Over residues 10961–10975 (LSTSEQVENASQNLG) the composition is skewed to polar residues. Basic and acidic residues-rich tracts occupy residues 10999 to 11009 (IHGEAESKLGE), 11045 to 11055 (SAEKTSLEVRD), and 11076 to 11089 (SNRDETSMEIRDLN). Residues 11018–11064 (TLQDLYEELKAKEDAVEAGAETSNADQSAEKTSLEVRDMKKKMKKKQ) are a coiled coil. Positions 11090–11108 (TQHSNQTGEDESSTFNFGQ) are enriched in polar residues. The span at 11159–11173 (KKGEENEKTKFEAKH) shows a compositional bias: basic and acidic residues. The segment covering 11174–11187 (LGSSSASDSLAEST) has biased composition (low complexity). Composition is skewed to basic and acidic residues over residues 11195–11211 (KGEVEKSELSIDMKNQD), 11271–11280 (IPDKNRDSDK), and 11295–11318 (ESAEAQKNESPEVKEISSFEEKTL). The span at 11374-11387 (SKVTTSFADESLTS) shows a compositional bias: polar residues. 2 stretches are compositionally biased toward basic and acidic residues: residues 11440–11464 (KVKDSDSLSSTDKKIGLKKSDKDQK) and 11472–11485 (GSKDQESVGYEEKT). Residues 11503 to 11515 (MTDQKNVQESQYA) are compositionally biased toward polar residues. Basic and acidic residues-rich tracts occupy residues 11624 to 11635 (LTKKQDENDAKK), 11645 to 11669 (AKKDSDTLSITSKKDKFGKRQDSRE), and 11722 to 11735 (VSEKGHDTYSEKTV). Residues 11754–11767 (ESLNASSALSTTDV) are compositionally biased toward polar residues. Over residues 11916–11937 (AEDKYVESRKKTTLKKKPEQKQ) the composition is skewed to basic and acidic residues. A coiled-coil region spans residues 12408–12428 (ELDDAKKRKKRRIKRVVERRN). One can recognise an Ig-like 12 domain in the interval 12432–12547 (PRLTQLIPPR…ESRDDDKSVD (116 aa)). Basic and acidic residues-rich tracts occupy residues 12537-12547 (EESRDDDKSVD), 12555-12567 (LEEKKDDGDDKSK), and 12609-12689 (VGAK…KKDA). The segment covering 12690–12701 (SQPSSSKESSPP) has biased composition (low complexity). Residues 12729 to 12740 (TMHSETNITTTI) are compositionally biased toward polar residues. Basic and acidic residues-rich tracts occupy residues 12766–12839 (ESAK…KNKS), 12852–12865 (ETKKDVSEIEEVPK), and 12889–12940 (PADD…DDKS). Positions 12797 to 12828 (KKSEKKDEVTAEKQSTEALIESKKKEVDESKI) form a coiled coil. Positions 12980-13103 (AEVNKAKKQK…LKLEEESAAK (124 aa)) form a coiled coil. Composition is skewed to basic and acidic residues over residues 13065 to 13124 (AAEA…KAGE), 13133 to 13145 (PTSKKTIDTKDVG), 13176 to 13191 (TDSEKVSKQKEQDEPT), 13203 to 13261 (EADK…LNDK), 13283 to 13327 (QAQA…EKQA), 13337 to 13354 (AVKKQKELDEKNKLEANK), and 13361 to 13416 (LKIE…DEKP). A coiled-coil region spans residues 13237–13380 (LDAQEKIKKV…SKQTVEEQAK (144 aa)). Residues 13431-13442 (SISQKSETSKTV) are compositionally biased toward polar residues. Residues 13452–13514 (ETQKVADAAR…KQKEKDEQLK (63 aa)) show a composition bias toward basic and acidic residues. The stretch at 13455-13628 (KVADAARKQK…ETKSKQTEEA (174 aa)) forms a coiled coil. Residues 13594–13637 (EKLAQEQSRLEDEAKKSAEKQKLESETKSKQTEEAPKESVDEKP) are compositionally biased toward basic and acidic residues. Residues 13651–13662 (SSISQKSKSAKS) show a composition bias toward low complexity. The span at 13684-13696 (KVEQSPDESTSAT) shows a compositional bias: polar residues. The segment covering 13697–13735 (IKRDPAQKTEEISKQDDGDEKKTTTDGKPPKPEDSEATP) has biased composition (basic and acidic residues). Residues 13747-13760 (SDSVASDASLADVS) are compositionally biased toward low complexity. Over residues 13761-13770 (KLSDDVEEKP) the composition is skewed to basic and acidic residues. The span at 13784–13793 (SVISETSSVD) shows a compositional bias: polar residues. Basic and acidic residues-rich tracts occupy residues 13795 to 13808 (IKPESVEIPTEKAE) and 13824 to 13843 (SEPKNAHKDDTEKTTDDMMT). The 74-residue stretch at 13963–14036 (PVDFVKYLPR…RAKYEDSGKY (74 aa)) folds into the Ig-like 13 domain. Fibronectin type-III domains are found at residues 14153 to 14247 (APGD…TGSP), 14253 to 14348 (VEFP…TVEG), and 14350 to 14448 (VPEI…VLAD). Ig-like domains follow at residues 14451-14542 (PRVL…VGIS), 14550-14634 (SSFS…VIVN), and 14638-14727 (PHIL…LVFE). The cysteines at positions 14568 and 14618 are disulfide-linked. Fibronectin type-III domains lie at 14826–14920 (APCD…TLES) and 14937–15027 (ILRT…LVPG). The interval 15011 to 15180 (VSSPSEETNP…TGKETTEKKK (170 aa)) is disordered. 2 stretches are compositionally biased toward basic and acidic residues: residues 15034–15060 (KTEKKTDAAKSESEQKSAEEIVAEKQV) and 15085–15117 (KVAENKGEETLQEVKEKLKKGKAVEKVQDESRR). Residues 15118 to 15132 (GSLQASSDNESVTTT) are compositionally biased toward polar residues. Over residues 15133–15177 (SEKRSEAELEKNSEKSAEKKSTSADLEAADKAETEKSETGKETTE) the composition is skewed to basic and acidic residues. Ig-like domains follow at residues 15180–15274 (KKVV…VSIA) and 15283–15371 (PKVE…IALR). Fibronectin type-III domains are found at residues 15383–15475 (PTGP…LKKK) and 15503–15596 (QIGK…TTES). Positions 15470-15503 (TTLKKKEETGKQKSEKSESDEKKSESDKVSELKQ) are disordered. Positions 15473 to 15503 (KKKEETGKQKSEKSESDEKKSESDKVSELKQ) are enriched in basic and acidic residues. Ig-like domains lie at 15599–15687 (PAFT…CKLT) and 15692–15786 (PEIN…IQVT). The 93-residue stretch at 15791-15883 (APGKPAVEDQ…DESELVVVKN (93 aa)) folds into the Fibronectin type-III 10 domain. Residues 15934 to 16189 (YIIHEELGKG…VQDALRHPWI (256 aa)) enclose the Protein kinase domain. ATP contacts are provided by residues 15940-15948 (LGKGAYGTV) and K15963. D16055 serves as the catalytic Proton acceptor. Residues 16206-16264 (KMQPKLDKSGVPARQKRNFLSLKRWSDDLLPIGRLAKRGAIFRRLTMDGVFERNIAFDT) are autoinhibitory domain. 4 consecutive Ig-like domains span residues 16268 to 16358 (PSVK…AKLS), 16500 to 16575 (GKQL…VAKN), 16605 to 16692 (PRFR…FSVV), and 16705 to 16789 (PKFL…KDFT). Cystine bridges form between C16290–C16342, C16508–C16571, C16627–C16677, and C16726–C16778. The segment at 16805 to 16827 (LTPVRSRSRSRSRSPSVVGGEIQ) is disordered. Ig-like domains are found at residues 16829–16918 (PPVV…AIVV), 16932–17025 (PTFV…LTIS), and 17037–17126 (PYFI…TEVS). A disordered region spans residues 17121–17169 (QNTEVSVTKSKEVKEKKEKKKVEKKDEGKKKPGRPGLPRPSGASKTEQV). A compositionally biased stretch (basic and acidic residues) spans 17129–17150 (KSKEVKEKKEKKKVEKKDEGKK). The 92-residue stretch at 17154–17245 (RPGLPRPSGA…MTSTLKTASV (92 aa)) folds into the Fibronectin type-III 11 domain. Ig-like domains follow at residues 17249–17336 (PQFT…CQVT), 17358–17447 (PTLQ…CNVA), 17457–17548 (PSFS…VMIA), 17570–17661 (PRFT…TQVI), 17676–17765 (PKFT…QATT), 17782–17873 (PRFV…LNVS), 18008–18097 (PKFM…SEID), 18121–18213 (PNFI…LQVS), 18224–18316 (PPLF…MQLD), 18329–18417 (PRVF…LELT), and 18429–18519 (PKFN…MILS). 2 disulfides stabilise this stretch: C17379-C17431 and C17478-C17530. A disulfide bond links C17697 and C17754. A disulfide bond links C18143 and C18195.

It belongs to the protein kinase superfamily. CAMK Ser/Thr protein kinase family. In terms of assembly, interacts (via C-terminus) with myosin. Interacts with actin. Requires Mg(2+) as cofactor. In terms of tissue distribution, expression is restricted to body wall, enteric and vulval muscles.

It localises to the cytoplasm. The protein resides in the myofibril. The protein localises to the sarcomere. Its subcellular location is the a band. It is found in the i band. It localises to the nucleus membrane. The catalysed reaction is L-seryl-[protein] + ATP = O-phospho-L-seryl-[protein] + ADP + H(+). It carries out the reaction L-threonyl-[protein] + ATP = O-phospho-L-threonyl-[protein] + ADP + H(+). Functionally, serine/threonine-protein kinase. Key component in the assembly and functioning of muscles. By providing connections at the level of individual microfilaments, it contributes to the fine balance of forces between the two halves of the sarcomere. The size and extensibility of the cross-links are the main determinants of sarcomere extensibility properties of muscle. In non-muscle cells, seems to play a role in chromosome condensation and chromosome segregation during mitosis. Might link the lamina network to chromatin or nuclear actin, or both during interphase. The chain is Titin homolog from Caenorhabditis elegans.